A 389-amino-acid polypeptide reads, in one-letter code: Succinyl-diaminopimelate desuccinylase (389 aa).

His-72 provides a ligand contact to Zn(2+). Asp-74 is a catalytic residue. Asp-105 contacts Zn(2+). The active-site Proton acceptor is Glu-144. Residues Glu-145, Glu-173, and His-362 each contribute to the Zn(2+) site.

This sequence belongs to the peptidase M20A family. DapE subfamily. Homodimer. Zn(2+) serves as cofactor. It depends on Co(2+) as a cofactor.

It catalyses the reaction N-succinyl-(2S,6S)-2,6-diaminopimelate + H2O = (2S,6S)-2,6-diaminopimelate + succinate. The protein operates within amino-acid biosynthesis; L-lysine biosynthesis via DAP pathway; LL-2,6-diaminopimelate from (S)-tetrahydrodipicolinate (succinylase route): step 3/3. Functionally, catalyzes the hydrolysis of N-succinyl-L,L-diaminopimelic acid (SDAP), forming succinate and LL-2,6-diaminopimelate (DAP), an intermediate involved in the bacterial biosynthesis of lysine and meso-diaminopimelic acid, an essential component of bacterial cell walls. This Nitrobacter hamburgensis (strain DSM 10229 / NCIMB 13809 / X14) protein is Succinyl-diaminopimelate desuccinylase.